Here is a 386-residue protein sequence, read N- to C-terminus: Outer membrane protein assembly factor BamB (386 aa).

The first 20 residues, 1–20 (MKKLFNQVLVAAGVLALLAG), serve as a signal peptide directing secretion. A lipid anchor (N-palmitoyl cysteine) is attached at Cys-21. Cys-21 carries the S-diacylglycerol cysteine lipid modification.

Belongs to the BamB family. In terms of assembly, part of the Bam complex.

The protein localises to the cell outer membrane. Its function is as follows. Part of the outer membrane protein assembly complex, which is involved in assembly and insertion of beta-barrel proteins into the outer membrane. The polypeptide is Outer membrane protein assembly factor BamB (Vibrio cholerae serotype O1 (strain ATCC 39315 / El Tor Inaba N16961)).